We begin with the raw amino-acid sequence, 577 residues long: Arginine--tRNA ligase (577 aa).

Residues 124-132 carry the 'HIGH' region motif; that stretch reads VAKEMHVGH.

This sequence belongs to the class-I aminoacyl-tRNA synthetase family. As to quaternary structure, monomer.

The protein resides in the cytoplasm. The catalysed reaction is tRNA(Arg) + L-arginine + ATP = L-arginyl-tRNA(Arg) + AMP + diphosphate. The chain is Arginine--tRNA ligase from Salmonella typhi.